A 90-amino-acid polypeptide reads, in one-letter code: Elongation factor 1-beta (90 aa).

It belongs to the EF-1-beta/EF-1-delta family.

In terms of biological role, promotes the exchange of GDP for GTP in EF-1-alpha/GDP, thus allowing the regeneration of EF-1-alpha/GTP that could then be used to form the ternary complex EF-1-alpha/GTP/AAtRNA. In Desulfurococcus amylolyticus (strain DSM 18924 / JCM 16383 / VKM B-2413 / 1221n) (Desulfurococcus kamchatkensis), this protein is Elongation factor 1-beta.